The primary structure comprises 472 residues: Squamosa promoter-binding-like protein 18 (472 aa).

Positions 89–110 (AKVPPSTSTLKRPRGGGGGGGG) are disordered. The segment at 112 to 189 (CPSCAVDGCK…DGHNRRRRKP (78 aa)) adopts an SBP-type zinc-finger fold. Cys-115, Cys-120, Cys-137, His-140, Cys-156, Cys-159, His-163, and Cys-175 together coordinate Zn(2+). A Bipartite nuclear localization signal motif is present at residues 172–188 (KRSCRKRLDGHNRRRRK). Disordered stretches follow at residues 179 to 218 (LDGHNRRRRKPQADSMSSGSFMTSQQGTRFASFTPPRPEP), 233 to 261 (SHHHHPHPVMTSRQPHFVGSPSSATTAAF), and 358 to 381 (SVDVSRMVQPSPAAAAGAEHHHHH). A compositionally biased stretch (polar residues) spans 192-209 (DSMSSGSFMTSQQGTRFA). Residues 252-261 (SPSSATTAAF) show a composition bias toward low complexity.

As to expression, expressed in young panicles.

It localises to the nucleus. In terms of biological role, trans-acting factor that binds specifically to the consensus nucleotide sequence 5'-TNCGTACAA-3'. May be involved in panicle development. This chain is Squamosa promoter-binding-like protein 18 (SPL18), found in Oryza sativa subsp. japonica (Rice).